Here is a 652-residue protein sequence, read N- to C-terminus: RNA-binding KH domain-containing protein RCF3 (652 aa).

A compositionally biased stretch (basic and acidic residues) spans 1 to 14; it reads MERSRSKRNYHYDQ. The segment at 1–63 is disordered; that stretch reads MERSRSKRNY…NGRPSKSHPE (63 aa). Gly residues predominate over residues 34-55; it reads FGGGGGGNNRYRGGGGGGGGNG. KH domains lie at 67–139 and 175–245; these read TTTY…QEAL and RVVT…LAIV. Positions 253-307 are disordered; the sequence is QHRDRSNFQGRSHSPERSFAAAGDDYMPQLRRQSSDRFPRGNFRNNNFSSRQSNY. The span at 292 to 306 shows a compositional bias: low complexity; the sequence is RGNFRNNNFSSRQSN. KH domains follow at residues 324–391, 408–476, and 576–640; these read ELVF…QEAL, LITT…LVEL, and RSTL…QSLL.

In terms of assembly, homodimer. Interacts with CPL1. Interacts with RS40 and RS41. Interacts with DRB1/HYL1 and SE. Interacts with CPL2. In terms of tissue distribution, expressed in roots, cotyledons, leaves, flowers and siliques.

The protein resides in the nucleus. It localises to the nucleus speckle. Acts as a negative regulator of osmotic stress-induced gene expression. Involved in the regulation of thermotolerance responses under heat stress. Functions as an upstream regulator of heat stress transcription factor (HSF) genes. Negatively regulates HSFA1A, HSFA1B and HSFA1D, but positively controls the expression of HSFA1E, HSFA3, HSFA9, HSFB3, and DREB2C. Forms a complex with CPL1 that modulates co-transcriptional processes such as mRNA capping and polyadenylation, and functions to repress stress-inducible gene expression. Regulates pre-mRNA processing under salt stress. Involved in primary miRNA processing and pri-miRNA biogenesis. Binds both intronless and intron-containing pri-miRNAs. Acts as a regulator of biotic stress response gene expression and basal JA-mediated responses involved in defense. Acts as a negative regulator of resistance to the fungal pathogen Fusarium oxysporum. This chain is RNA-binding KH domain-containing protein RCF3, found in Arabidopsis thaliana (Mouse-ear cress).